A 64-amino-acid chain; its full sequence is Large ribosomal subunit protein bL35 (64 aa).

A disordered region spans residues M1–S25.

It belongs to the bacterial ribosomal protein bL35 family.

The sequence is that of Large ribosomal subunit protein bL35 from Koribacter versatilis (strain Ellin345).